The primary structure comprises 316 residues: Pantothenate kinase (316 aa).

ATP is bound at residue 95–102 (GSVAVGKS).

The protein belongs to the prokaryotic pantothenate kinase family.

The protein localises to the cytoplasm. The enzyme catalyses (R)-pantothenate + ATP = (R)-4'-phosphopantothenate + ADP + H(+). The protein operates within cofactor biosynthesis; coenzyme A biosynthesis; CoA from (R)-pantothenate: step 1/5. The chain is Pantothenate kinase from Pectobacterium carotovorum subsp. carotovorum (strain PC1).